Consider the following 380-residue polypeptide: N5-carboxyaminoimidazole ribonucleotide synthase (380 aa).

Residues arginine 108, lysine 148, 153–159, 183–186, glutamate 191, histidine 214, and 268–269 each bind ATP; these read GYDGKGQ, ESWV, and NE. The ATP-grasp domain occupies 112 to 298; sequence KKAIQSAGCE…QFEQHIRAVC (187 aa).

The protein belongs to the PurK/PurT family. As to quaternary structure, homodimer.

It carries out the reaction 5-amino-1-(5-phospho-beta-D-ribosyl)imidazole + hydrogencarbonate + ATP = 5-carboxyamino-1-(5-phospho-D-ribosyl)imidazole + ADP + phosphate + 2 H(+). The protein operates within purine metabolism; IMP biosynthesis via de novo pathway; 5-amino-1-(5-phospho-D-ribosyl)imidazole-4-carboxylate from 5-amino-1-(5-phospho-D-ribosyl)imidazole (N5-CAIR route): step 1/2. Catalyzes the ATP-dependent conversion of 5-aminoimidazole ribonucleotide (AIR) and HCO(3)(-) to N5-carboxyaminoimidazole ribonucleotide (N5-CAIR). The polypeptide is N5-carboxyaminoimidazole ribonucleotide synthase (Bacillus subtilis (strain 168)).